Reading from the N-terminus, the 428-residue chain is Light-independent protochlorophyllide reductase subunit N (428 aa).

Residues cysteine 31, cysteine 56, and cysteine 117 each contribute to the [4Fe-4S] cluster site.

Belongs to the BchN/ChlN family. Protochlorophyllide reductase is composed of three subunits; BchL, BchN and BchB. Forms a heterotetramer of two BchB and two BchN subunits. The cofactor is [4Fe-4S] cluster.

The catalysed reaction is chlorophyllide a + oxidized 2[4Fe-4S]-[ferredoxin] + 2 ADP + 2 phosphate = protochlorophyllide a + reduced 2[4Fe-4S]-[ferredoxin] + 2 ATP + 2 H2O. Its pathway is porphyrin-containing compound metabolism; bacteriochlorophyll biosynthesis (light-independent). Functionally, component of the dark-operative protochlorophyllide reductase (DPOR) that uses Mg-ATP and reduced ferredoxin to reduce ring D of protochlorophyllide (Pchlide) to form chlorophyllide a (Chlide). This reaction is light-independent. The NB-protein (BchN-BchB) is the catalytic component of the complex. The sequence is that of Light-independent protochlorophyllide reductase subunit N from Rhodopseudomonas palustris (strain BisB18).